The chain runs to 98 residues: Citrate lyase acyl carrier protein (98 aa).

Position 14 is an O-(phosphoribosyl dephospho-coenzyme A)serine (S14).

The protein belongs to the CitD family. As to quaternary structure, oligomer with a subunit composition of (alpha,beta,gamma)6.

It is found in the cytoplasm. Functionally, covalent carrier of the coenzyme of citrate lyase. This chain is Citrate lyase acyl carrier protein, found in Vibrio cholerae serotype O1 (strain ATCC 39315 / El Tor Inaba N16961).